The chain runs to 515 residues: Kelch repeat protein M-T8 (515 aa).

In terms of domain architecture, BTB spans 16–82 (CDVEIVAEGK…MYTESIELHK (67 aa)). 5 Kelch repeats span residues 280 to 326 (VLYF…AIGG), 328 to 374 (IYII…CYKN), 376 to 423 (IWVL…VYKE), 424 to 471 (RLYC…VYND), and 473 to 512 (LYVF…YATY).

The protein belongs to the poxviruses Kelch family.

This Oryctolagus cuniculus (Rabbit) protein is Kelch repeat protein M-T8.